Reading from the N-terminus, the 782-residue chain is MRQKSLNVLEFDKIKALIENETISDLGKEKVVDMAPATDFNTVEFQMNETDEISQIYNKHRMPSLSGLAKISTYIHRAKIGGVLSVSELNVIKRLIQIQNQYKTFYNNLLNEEETINYPILNDRMEQLPVLSDLYQSIHQKCDTYDLYDNASYELQGIRSKISSTNQRIKQNLDKIVKSQANQKKLSDAIVTVRNERNVIPVKAEYRQDFNGIVHDQSASGQTLYIEPSSIVEMSNQISRLKNDEAIERERILSALTVEVAEEADACLISESIMGQIDFLTAKARYASSIKGTKPQFTKDRTVYLPKAFHPLLDKQTVVANTIEFAQDIETVIITGPNTGGKTVTLKTLGLIIVMAQSGILIPTLDGSQLSIFENVYCDIGDEQSIEQSLSTFSSHMKNIVEILQDTTKNSLILFDELGAGTDPSEGAALAMSILDHVHEIGSLVMATTHYPELKAYSYNREGVMNASVEFDVNTLSPTYKLLMGVPGRSNAFDISKKLGLNMKVIQKAKSMIGQDEQEINEMIASLESNSKRVDEQRIELDYLLREAQDTHDALAKQYEQYQNHEKQLMNEAKEKANQRVKSATKEADDILKELRELRDQKGADVKEHELIDKKKQLDDQYEAKSLKQNVQKKKWDEINAGDEVKVLTYGQKGEVLELIDNNEAVVQMGIIKMKLPLEDLEKTKKTKSEPTKMIKRENRQSIKMELDLRGYRYDEAMVAVDQYLDQAVLSNYEQVYIIHGKGTGALQKGVQNHLKRHKSVASYRNGMPSEGGFGVTVVEIK.

ATP is bound at residue 336 to 343; it reads GPNTGGKT. Residues 707–782 form the Smr domain; the sequence is LDLRGYRYDE…GFGVTVVEIK (76 aa).

Belongs to the DNA mismatch repair MutS family. MutS2 subfamily. In terms of assembly, homodimer. Binds to stalled ribosomes, contacting rRNA.

Endonuclease that is involved in the suppression of homologous recombination and thus may have a key role in the control of bacterial genetic diversity. In terms of biological role, acts as a ribosome collision sensor, splitting the ribosome into its 2 subunits. Detects stalled/collided 70S ribosomes which it binds and splits by an ATP-hydrolysis driven conformational change. Acts upstream of the ribosome quality control system (RQC), a ribosome-associated complex that mediates the extraction of incompletely synthesized nascent chains from stalled ribosomes and their subsequent degradation. Probably generates substrates for RQC. The sequence is that of Endonuclease MutS2 from Staphylococcus saprophyticus subsp. saprophyticus (strain ATCC 15305 / DSM 20229 / NCIMB 8711 / NCTC 7292 / S-41).